Here is a 959-residue protein sequence, read N- to C-terminus: Probable transport protein MmpL4 (959 aa).

11 helical membrane-spanning segments follow: residues 25-45, 205-225, 239-259, 300-320, 333-353, 381-401, 766-786, 790-810, 818-838, 872-892, and 902-922; these read FAVP…VFIP, VIVI…VILL, VVAL…VNLL, FHVI…LSFA, AVGM…VLTV, WPLP…LALP, WDLV…MLII, FVAA…SFGL, ILGI…LLAV, VVTN…VSDL, and IGLG…PSIA.

Belongs to the resistance-nodulation-cell division (RND) (TC 2.A.6) family. MmpL subfamily.

The protein localises to the cell membrane. The chain is Probable transport protein MmpL4 (mmpL4) from Mycobacterium leprae (strain TN).